The primary structure comprises 404 residues: NADH-quinone oxidoreductase subunit D (404 aa).

This sequence belongs to the complex I 49 kDa subunit family. NDH-1 is composed of 14 different subunits. Subunits NuoB, C, D, E, F, and G constitute the peripheral sector of the complex.

The protein resides in the cell inner membrane. It carries out the reaction a quinone + NADH + 5 H(+)(in) = a quinol + NAD(+) + 4 H(+)(out). Its function is as follows. NDH-1 shuttles electrons from NADH, via FMN and iron-sulfur (Fe-S) centers, to quinones in the respiratory chain. The immediate electron acceptor for the enzyme in this species is believed to be ubiquinone. Couples the redox reaction to proton translocation (for every two electrons transferred, four hydrogen ions are translocated across the cytoplasmic membrane), and thus conserves the redox energy in a proton gradient. This chain is NADH-quinone oxidoreductase subunit D, found in Dinoroseobacter shibae (strain DSM 16493 / NCIMB 14021 / DFL 12).